The following is a 480-amino-acid chain: tRNA-2-methylthio-N(6)-dimethylallyladenosine synthase (480 aa).

One can recognise an MTTase N-terminal domain in the interval 2–118 (NRVHIKTYGC…VPGYLDNLRA (117 aa)). The [4Fe-4S] cluster site is built by C11, C47, and C81. A disordered region spans residues 145–169 (DHLLPQDSDSDSQPSTLNSQLRGAA). Positions 149-159 (PQDSDSDSQPS) are enriched in low complexity. The 235-residue stretch at 171 to 405 (PPPQITAFVS…LELLRQNSER (235 aa)) folds into the Radical SAM core domain. [4Fe-4S] cluster contacts are provided by C185, C189, and C192. In terms of domain architecture, TRAM spans 408–470 (ALLLDTVEEV…VSTLYGELML (63 aa)).

Belongs to the methylthiotransferase family. MiaB subfamily. Monomer. [4Fe-4S] cluster is required as a cofactor.

Its subcellular location is the cytoplasm. It catalyses the reaction N(6)-dimethylallyladenosine(37) in tRNA + (sulfur carrier)-SH + AH2 + 2 S-adenosyl-L-methionine = 2-methylsulfanyl-N(6)-dimethylallyladenosine(37) in tRNA + (sulfur carrier)-H + 5'-deoxyadenosine + L-methionine + A + S-adenosyl-L-homocysteine + 2 H(+). In terms of biological role, catalyzes the methylthiolation of N6-(dimethylallyl)adenosine (i(6)A), leading to the formation of 2-methylthio-N6-(dimethylallyl)adenosine (ms(2)i(6)A) at position 37 in tRNAs that read codons beginning with uridine. This is tRNA-2-methylthio-N(6)-dimethylallyladenosine synthase from Opitutus terrae (strain DSM 11246 / JCM 15787 / PB90-1).